The sequence spans 188 residues: Photosystem I assembly protein Ycf4 (188 aa).

2 consecutive transmembrane segments (helical) span residues 26-46 (IWWG…GLSS) and 70-90 (LLFY…TIIL).

It belongs to the Ycf4 family.

The protein resides in the cellular thylakoid membrane. Seems to be required for the assembly of the photosystem I complex. In Rippkaea orientalis (strain PCC 8801 / RF-1) (Cyanothece sp. (strain PCC 8801)), this protein is Photosystem I assembly protein Ycf4.